We begin with the raw amino-acid sequence, 86 residues long: MKSSMQLISTLFFLVILVVAPGMKMVVEGQPQLCETKSLNYRGLCLKWRSCKRVCISEGFPDGRCKGFFNNKCVCRKPCALLSTEN.

The first 29 residues, 1–29, serve as a signal peptide directing secretion; that stretch reads MKSSMQLISTLFFLVILVVAPGMKMVVEG. The residue at position 30 (Gln-30) is a Pyrrolidone carboxylic acid. 4 disulfides stabilise this stretch: Cys-34/Cys-79, Cys-45/Cys-65, Cys-51/Cys-73, and Cys-55/Cys-75.

Belongs to the DEFL family.

It localises to the secreted. In Arabidopsis thaliana (Mouse-ear cress), this protein is Putative defensin-like protein 9 (LCR76).